Consider the following 132-residue polypeptide: Translation initiation factor 5A (132 aa).

Position 36 is a hypusine (Lys36).

This sequence belongs to the eIF-5A family.

The protein localises to the cytoplasm. Its function is as follows. Functions by promoting the formation of the first peptide bond. This is Translation initiation factor 5A (eIF5A) from Pyrobaculum islandicum (strain DSM 4184 / JCM 9189 / GEO3).